The sequence spans 461 residues: 23S rRNA (uracil(1939)-C(5))-methyltransferase RlmD (461 aa).

The disordered stretch occupies residues 1–26 (MAKHERGLRFQPTGGSKAPQIPTGKK). In terms of domain architecture, TRAM spans 20–78 (QIPTGKKQRLSIERLANDGRGIAFFEGKTWFVLGALAGEEVEARVLGAHGKVVEARTER). Cys91, Cys97, Cys100, and Cys179 together coordinate [4Fe-4S] cluster. Residues Gln283, Phe312, Asn317, Glu333, Asp360, and Asp381 each contribute to the S-adenosyl-L-methionine site. The Nucleophile role is filled by Cys407.

This sequence belongs to the class I-like SAM-binding methyltransferase superfamily. RNA M5U methyltransferase family. RlmD subfamily.

The catalysed reaction is uridine(1939) in 23S rRNA + S-adenosyl-L-methionine = 5-methyluridine(1939) in 23S rRNA + S-adenosyl-L-homocysteine + H(+). Catalyzes the formation of 5-methyl-uridine at position 1939 (m5U1939) in 23S rRNA. The protein is 23S rRNA (uracil(1939)-C(5))-methyltransferase RlmD of Pseudomonas fluorescens (strain Pf0-1).